We begin with the raw amino-acid sequence, 283 residues long: Pantothenate synthetase (283 aa).

26–33 (MGNLHAGH) contacts ATP. Catalysis depends on His-33, which acts as the Proton donor. Gln-57 serves as a coordination point for (R)-pantoate. Gln-57 contacts beta-alanine. Residue 144 to 147 (GRKD) coordinates ATP. Gln-150 contacts (R)-pantoate. ATP contacts are provided by residues Leu-173 and 181-184 (MSSR).

The protein belongs to the pantothenate synthetase family. In terms of assembly, homodimer.

The protein resides in the cytoplasm. It catalyses the reaction (R)-pantoate + beta-alanine + ATP = (R)-pantothenate + AMP + diphosphate + H(+). It participates in cofactor biosynthesis; (R)-pantothenate biosynthesis; (R)-pantothenate from (R)-pantoate and beta-alanine: step 1/1. In terms of biological role, catalyzes the condensation of pantoate with beta-alanine in an ATP-dependent reaction via a pantoyl-adenylate intermediate. This Thiobacillus denitrificans (strain ATCC 25259 / T1) protein is Pantothenate synthetase.